The sequence spans 179 residues: Adenine phosphoribosyltransferase (179 aa).

This sequence belongs to the purine/pyrimidine phosphoribosyltransferase family. Homodimer.

Its subcellular location is the cytoplasm. It catalyses the reaction AMP + diphosphate = 5-phospho-alpha-D-ribose 1-diphosphate + adenine. It functions in the pathway purine metabolism; AMP biosynthesis via salvage pathway; AMP from adenine: step 1/1. Its function is as follows. Catalyzes a salvage reaction resulting in the formation of AMP, that is energically less costly than de novo synthesis. In Bradyrhizobium diazoefficiens (strain JCM 10833 / BCRC 13528 / IAM 13628 / NBRC 14792 / USDA 110), this protein is Adenine phosphoribosyltransferase.